The chain runs to 734 residues: Photosystem I P700 chlorophyll a apoprotein A2 (734 aa).

Helical transmembrane passes span 46 to 69, 135 to 158, 175 to 199, 273 to 291, 330 to 353, 369 to 395, 417 to 439, and 517 to 535; these read IFASHFGQLAIIFLWTSGNLFHVA, LYTGALFLLFISAISLVGGWLHLQ, LNHHLSGLFGVSSLAWAGHLVHVAI, IAHHHLAIAFIFLVAGHMY, IHFQLGLALASLGVITSLVAQHMY, AALYTHHQYIAGFIMTGAFAHGAIFFI, AIISHLSWASLFLGFHTLGLYVH, and FLVHHAIALGLHTTTLILV. Positions 559 and 568 each coordinate [4Fe-4S] cluster. A run of 2 helical transmembrane segments spans residues 575-596 and 643-665; these read AFYLAVFWMLNTIGWVTFYWHW and LSVWAWMFLFGHLVWATGFMFLI. Chlorophyll a contacts are provided by His-654, Met-662, and Tyr-670. Trp-671 is a phylloquinone binding site. The helical transmembrane segment at 707–727 threads the bilayer; sequence LVGLAHFSVGYIFTYAAFLIA.

It belongs to the PsaA/PsaB family. The PsaA/B heterodimer binds the P700 chlorophyll special pair and subsequent electron acceptors. PSI consists of a core antenna complex that captures photons, and an electron transfer chain that converts photonic excitation into a charge separation. The eukaryotic PSI reaction center is composed of at least 11 subunits. P700 is a chlorophyll a/chlorophyll a' dimer, A0 is one or more chlorophyll a, A1 is one or both phylloquinones and FX is a shared 4Fe-4S iron-sulfur center. is required as a cofactor.

The protein resides in the plastid. It is found in the chloroplast thylakoid membrane. It catalyses the reaction reduced [plastocyanin] + hnu + oxidized [2Fe-2S]-[ferredoxin] = oxidized [plastocyanin] + reduced [2Fe-2S]-[ferredoxin]. Its function is as follows. PsaA and PsaB bind P700, the primary electron donor of photosystem I (PSI), as well as the electron acceptors A0, A1 and FX. PSI is a plastocyanin-ferredoxin oxidoreductase, converting photonic excitation into a charge separation, which transfers an electron from the donor P700 chlorophyll pair to the spectroscopically characterized acceptors A0, A1, FX, FA and FB in turn. Oxidized P700 is reduced on the lumenal side of the thylakoid membrane by plastocyanin. This Nymphaea alba (White water-lily) protein is Photosystem I P700 chlorophyll a apoprotein A2.